Here is a 120-residue protein sequence, read N- to C-terminus: PE family protein PE10 (120 aa).

The segment at 29-59 (GQVTGNGGSGNSGTSAAAANPNSDNTASIAD) is disordered. Residues 40–51 (SGTSAAAANPNS) are compositionally biased toward low complexity.

Belongs to the mycobacterial PE family. As to quaternary structure, forms a complex with PE9. The complex interacts with human TLR4.

Its subcellular location is the secreted. It is found in the cell wall. In terms of biological role, together with PE9, induces macrophage apoptosis through human Toll-like receptor 4 (TLR4) signaling pathway. Interaction with TLR4 leads to increased levels of phospho-IRF-3, increase in the transcript levels of IFN-beta and pro-apoptotic genes, up-regulation of IL-10, down-regulation of IL-1b and enhanced levels of macrophage apoptosis. This is PE family protein PE10 from Mycobacterium tuberculosis (strain ATCC 25618 / H37Rv).